Here is a 488-residue protein sequence, read N- to C-terminus: 3-octaprenyl-4-hydroxybenzoate carboxy-lyase (488 aa).

Asn172 contributes to the Mn(2+) binding site. Residues 175–177, 189–191, and 194–195 each bind prenylated FMN; these read IYR, RWL, and RG. Residue Glu238 coordinates Mn(2+). Asp287 acts as the Proton donor in catalysis.

This sequence belongs to the UbiD family. Homohexamer. Prenylated FMN serves as cofactor. Mn(2+) is required as a cofactor.

The protein localises to the cell membrane. The catalysed reaction is a 4-hydroxy-3-(all-trans-polyprenyl)benzoate + H(+) = a 2-(all-trans-polyprenyl)phenol + CO2. Its pathway is cofactor biosynthesis; ubiquinone biosynthesis. Its function is as follows. Catalyzes the decarboxylation of 3-octaprenyl-4-hydroxy benzoate to 2-octaprenylphenol, an intermediate step in ubiquinone biosynthesis. The polypeptide is 3-octaprenyl-4-hydroxybenzoate carboxy-lyase (Pseudomonas fluorescens (strain ATCC BAA-477 / NRRL B-23932 / Pf-5)).